A 260-amino-acid polypeptide reads, in one-letter code: Triosephosphate isomerase (260 aa).

N11–K13 provides a ligand contact to substrate. H103 (electrophile) is an active-site residue. The active-site Proton acceptor is the E175. Substrate contacts are provided by residues G181, S220, and G241–G242.

Belongs to the triosephosphate isomerase family. In terms of assembly, homodimer.

The protein resides in the cytoplasm. It catalyses the reaction D-glyceraldehyde 3-phosphate = dihydroxyacetone phosphate. It participates in carbohydrate biosynthesis; gluconeogenesis. The protein operates within carbohydrate degradation; glycolysis; D-glyceraldehyde 3-phosphate from glycerone phosphate: step 1/1. Its function is as follows. Involved in the gluconeogenesis. Catalyzes stereospecifically the conversion of dihydroxyacetone phosphate (DHAP) to D-glyceraldehyde-3-phosphate (G3P). The polypeptide is Triosephosphate isomerase (Shewanella sp. (strain MR-7)).